The primary structure comprises 566 residues: Putative pentatricopeptide repeat-containing protein At1g28020 (566 aa).

9 PPR repeats span residues 136–171 (GDSVYTSLLNSYARSDKTLCKAEATFQKMRDLGLLL), 172–206 (RPVPYNAMMSLYSALKNREKVEELLLEMKDNDVEA), 207–242 (DNVTVNNVLKLYSAVCDVTEMEKFLNKWEGIHGIKL), 243–273 (EWHTTLDMAKAYLRARSSGKAMKMLRLTEQL), 279–309 (LKSAYDHLMKLYGEAGNREEVLRVWKLYKSK), 314–348 (DNNGYRTVIRSLLKVDDIVGAEEIYKVWESLPLEF), 349–385 (DHRIPTMLASGYRDRGMTEKAEKLMNSKTIKDRRMNK), 468–504 (DYSVYVALLSSYAKSDKNLGNMVDEILREMEENNVDP), and 505–540 (DLITVNHVLKVYAAESKIQAMEMFMRRWGTEDGIKL).

Belongs to the PPR family. P subfamily.

This chain is Putative pentatricopeptide repeat-containing protein At1g28020, found in Arabidopsis thaliana (Mouse-ear cress).